The sequence spans 384 residues: tRNA-specific 2-thiouridylase MnmA (384 aa).

ATP-binding positions include 9 to 16 (GMSGGVDS) and M35. The segment at 95-97 (NPD) is interaction with target base in tRNA. C100 (nucleophile) is an active-site residue. C100 and C196 form a disulfide bridge. G124 contributes to the ATP binding site. The tract at residues 146 to 148 (KDQ) is interaction with tRNA. C196 functions as the Cysteine persulfide intermediate in the catalytic mechanism. The interval 308-309 (RY) is interaction with tRNA.

It belongs to the MnmA/TRMU family.

The protein resides in the cytoplasm. The catalysed reaction is S-sulfanyl-L-cysteinyl-[protein] + uridine(34) in tRNA + AH2 + ATP = 2-thiouridine(34) in tRNA + L-cysteinyl-[protein] + A + AMP + diphosphate + H(+). In terms of biological role, catalyzes the 2-thiolation of uridine at the wobble position (U34) of tRNA, leading to the formation of s(2)U34. The sequence is that of tRNA-specific 2-thiouridylase MnmA from Burkholderia ambifaria (strain ATCC BAA-244 / DSM 16087 / CCUG 44356 / LMG 19182 / AMMD) (Burkholderia cepacia (strain AMMD)).